We begin with the raw amino-acid sequence, 492 residues long: Coagulation factor X (492 aa).

A signal peptide spans 1 to 23; the sequence is MAGLLHLVLLSTALGGLLRPAGS. Positions 24 to 40 are excised as a propeptide; it reads VFLPRDQAHRVLQRARR. Residues 41–85 enclose the Gla domain; sequence ANSFLEEVKQGNLERECLEEACSLEEAREVFEDAEQTDEFWSKYK. Residues E46, E47, E54, E56, E59, E60, E65, E66, E69, E72, E75, and E79 each carry the 4-carboxyglutamate modification. C57 and C62 form a disulfide bridge. An EGF-like 1; calcium-binding domain is found at 86–122; sequence DGDQCEGHPCLNQGHCKDGIGDYTCTCAEGFEGKNCE. Intrachain disulfides connect C90/C101, C95/C110, C112/C121, C129/C140, C136/C149, C151/C164, C172/C341, C240/C245, C260/C276, C389/C403, and C414/C442. D103 is modified ((3R)-3-hydroxyaspartate). The region spanning 125 to 165 is the EGF-like 2 domain; the sequence is TREICSLDNGGCDQFCREERSEVRCSCAHGYVLGDDSKSCV. Residues 183–233 constitute a propeptide, activation peptide; that stretch reads WAIHTSEDALDASELEHYDPADLSPTESSLDLLGLNRTEPSAGEDGSQVVR. Y200 is subject to Sulfotyrosine. O-linked (GalNAc...) threonine glycosylation is present at T208. The N-linked (GlcNAc...) asparagine glycan is linked to N218. One can recognise a Peptidase S1 domain in the interval 234–466; that stretch reads IVGGRDCAEG…FLKWIDKIMK (233 aa). Residues H275 and D321 each act as charge relay system in the active site. The Charge relay system role is filled by S418. Positions 472–492 are disordered; that stretch reads AGSRGHSEAPATWTVPPPLPL. A propeptide spans 476-492 (may be removed but is not necessary for activation); sequence GHSEAPATWTVPPPLPL. O-linked (GalNAc...) threonine glycosylation is present at T485.

It belongs to the peptidase S1 family. In terms of assembly, the two chains are formed from a single-chain precursor by the excision of two Arg residues and are held together by 1 or more disulfide bonds. Forms a heterodimer with SERPINA5. Interacts (activated) with guianensin, an anticoagulant protein from Simulium guianense saliva. Interacts (activated) with simukunin, an anticoagulant protein from Simulium vittatum saliva. Post-translationally, the vitamin K-dependent, enzymatic carboxylation of some glutamate residues allows the modified protein to bind calcium. In terms of processing, N- and O-glycosylated. Proteolytically cleaved and activated by cathepsin CTSG. The activation peptide is cleaved by factor IXa (in the intrinsic pathway), or by factor VIIa (in the extrinsic pathway). Post-translationally, the iron and 2-oxoglutarate dependent 3-hydroxylation of aspartate and asparagine is (R) stereospecific within EGF domains.

The protein resides in the secreted. It catalyses the reaction Selective cleavage of Arg-|-Thr and then Arg-|-Ile bonds in prothrombin to form thrombin.. Its activity is regulated as follows. Inhibited by SERPINA5. In terms of biological role, factor Xa is a vitamin K-dependent glycoprotein that converts prothrombin to thrombin in the presence of factor Va, calcium and phospholipid during blood clotting. Factor Xa activates pro-inflammatory and pro-fibrotic signaling pathways in a protease-activated receptor (PAR)-dependent manner. The protein is Coagulation factor X (F10) of Bos taurus (Bovine).